Reading from the N-terminus, the 292-residue chain is Large ribosomal subunit protein uL18 (292 aa).

The protein belongs to the universal ribosomal protein uL18 family. As to quaternary structure, component of the large ribosomal subunit (LSU).

The protein resides in the cytoplasm. Its subcellular location is the nucleus. Functionally, component of the ribosome, a large ribonucleoprotein complex responsible for the synthesis of proteins in the cell. The small ribosomal subunit (SSU) binds messenger RNAs (mRNAs) and translates the encoded message by selecting cognate aminoacyl-transfer RNA (tRNA) molecules. The large subunit (LSU) contains the ribosomal catalytic site termed the peptidyl transferase center (PTC), which catalyzes the formation of peptide bonds, thereby polymerizing the amino acids delivered by tRNAs into a polypeptide chain. The nascent polypeptides leave the ribosome through a tunnel in the LSU and interact with protein factors that function in enzymatic processing, targeting, and the membrane insertion of nascent chains at the exit of the ribosomal tunnel. This chain is Large ribosomal subunit protein uL18 (rpl5), found in Dictyostelium discoideum (Social amoeba).